A 141-amino-acid chain; its full sequence is Small ribosomal subunit protein uS12 (141 aa).

The protein belongs to the universal ribosomal protein uS12 family. In terms of assembly, part of the 30S ribosomal subunit.

With S4 and S5 plays an important role in translational accuracy. Located at the interface of the 30S and 50S subunits. The sequence is that of Small ribosomal subunit protein uS12 from Methanobrevibacter smithii (strain ATCC 35061 / DSM 861 / OCM 144 / PS).